The chain runs to 159 residues: 2-C-methyl-D-erythritol 2,4-cyclodiphosphate synthase (159 aa).

A divalent metal cation is bound by residues Asp-8 and His-10. Residues 8-10 (DVH) and 34-35 (HS) each bind 4-CDP-2-C-methyl-D-erythritol 2-phosphate. Residue His-42 coordinates a divalent metal cation. 4-CDP-2-C-methyl-D-erythritol 2-phosphate contacts are provided by residues 56–58 (DIG), 61–65 (FPDTD), 100–106 (AQAPKML), 132–135 (TTTE), Phe-139, and Arg-142.

Belongs to the IspF family. In terms of assembly, homotrimer. A divalent metal cation serves as cofactor.

The enzyme catalyses 4-CDP-2-C-methyl-D-erythritol 2-phosphate = 2-C-methyl-D-erythritol 2,4-cyclic diphosphate + CMP. It participates in isoprenoid biosynthesis; isopentenyl diphosphate biosynthesis via DXP pathway; isopentenyl diphosphate from 1-deoxy-D-xylulose 5-phosphate: step 4/6. Functionally, involved in the biosynthesis of isopentenyl diphosphate (IPP) and dimethylallyl diphosphate (DMAPP), two major building blocks of isoprenoid compounds. Catalyzes the conversion of 4-diphosphocytidyl-2-C-methyl-D-erythritol 2-phosphate (CDP-ME2P) to 2-C-methyl-D-erythritol 2,4-cyclodiphosphate (ME-CPP) with a corresponding release of cytidine 5-monophosphate (CMP). In Salmonella choleraesuis (strain SC-B67), this protein is 2-C-methyl-D-erythritol 2,4-cyclodiphosphate synthase.